A 156-amino-acid chain; its full sequence is Ribosome maturation factor RimP (156 aa).

Belongs to the RimP family.

It localises to the cytoplasm. In terms of biological role, required for maturation of 30S ribosomal subunits. This is Ribosome maturation factor RimP from Halalkalibacterium halodurans (strain ATCC BAA-125 / DSM 18197 / FERM 7344 / JCM 9153 / C-125) (Bacillus halodurans).